The sequence spans 330 residues: MELKFSTFLSLTLLFSSVLNPALSDLCNPDDKKVLLQIKKAFGDPYVLASWKSDTDCCDWYCVTCDSTTNRINSLTIFAGQVSGQIPALVGDLPYLETLEFHKQPNLTGPIQPAIAKLKGLKSLRLSWTNLSGSVPDFLSQLKNLTFLDLSFNNLTGAIPSSLSELPNLGALRLDRNKLTGHIPISFGQFIGNVPDLYLSHNQLSGNIPTSFAQMDFTSIDLSRNKLEGDASVIFGLNKTTQIVDLSRNLLEFNLSKVEFPTSLTSLDINHNKIYGSIPVEFTQLNFQFLNVSYNRLCGQIPVGGKLQSFDEYSYFHNRCLCGAPLPSCK.

Positions Met1–Ser24 are cleaved as a signal peptide. 2 disulfides stabilise this stretch: Cys27–Cys57 and Cys58–Cys65. LRR repeat units follow at residues Thr69–Asp92, Leu93–Leu118, Lys119–Gln141, Leu142–Leu166, Pro167–Gly192, Val194–Met215, and Phe217–Leu237. 4 N-linked (GlcNAc...) asparagine glycosylation sites follow: Asn106, Asn130, Asn144, and Asn154. 2 N-linked (GlcNAc...) asparagine glycosylation sites follow: Asn238 and Asn254. LRR repeat units lie at residues Lys239 to Pro261, Thr262 to Leu285, and Phe287 to Ser309. Asn291 is a glycosylation site (N-linked (GlcNAc...) asparagine). 2 cysteine pairs are disulfide-bonded: Cys298-Cys320 and Cys322-Cys329.

The protein belongs to the polygalacturonase-inhibiting protein family. In terms of assembly, homodimer. Post-translationally, N-linked glycosylated. In terms of tissue distribution, mostly expressed in fruits, and, to a lower extent, in flowers and leaves.

The protein resides in the secreted. It localises to the extracellular space. The protein localises to the apoplast. It is found in the cell wall. In terms of biological role, inhibitor of fungal polygalacturonase. It is an important factor for plant resistance to phytopathogenic fungi. This is Polygalacturonase inhibitor (PGIP) from Pyrus communis (Pear).